The chain runs to 473 residues: ATP-dependent 6-phosphofructokinase 1 (473 aa).

The residue at position 71 (S71) is a Phosphoserine. ATP-binding positions include G102, 165–166 (RG), and 190–193 (GDGS). A Mg(2+)-binding site is contributed by D191. Residues 219–221 (TID), 264–266 (MGR), E320, and 376–379 (YMIR) contribute to the substrate site. D221 functions as the Proton acceptor in the catalytic mechanism.

The protein belongs to the phosphofructokinase type A (PFKA) family. PPi-dependent PFK group II subfamily. Atypical ATP-dependent clade 'X' sub-subfamily. As to quaternary structure, homotetramer. The cofactor is Mg(2+). In terms of tissue distribution, expressed in roots, leaves, stems and flowers.

The protein resides in the cytoplasm. It catalyses the reaction beta-D-fructose 6-phosphate + ATP = beta-D-fructose 1,6-bisphosphate + ADP + H(+). It participates in carbohydrate degradation; glycolysis; D-glyceraldehyde 3-phosphate and glycerone phosphate from D-glucose: step 3/4. Allosterically activated by AMP. In terms of biological role, catalyzes the phosphorylation of D-fructose 6-phosphate to fructose 1,6-bisphosphate by ATP, the first committing step of glycolysis. The protein is ATP-dependent 6-phosphofructokinase 1 of Arabidopsis thaliana (Mouse-ear cress).